The sequence spans 474 residues: 6-phospho-beta-galactosidase (474 aa).

D-galactose 6-phosphate contacts are provided by glutamine 19, histidine 116, asparagine 159, glutamate 160, and asparagine 297. The active-site Proton donor is the glutamate 160. The Nucleophile role is filled by glutamate 375. Serine 433, tryptophan 434, lysine 440, and tyrosine 442 together coordinate D-galactose 6-phosphate.

The protein belongs to the glycosyl hydrolase 1 family.

It catalyses the reaction a 6-phospho-beta-D-galactoside + H2O = D-galactose 6-phosphate + an alcohol. It participates in carbohydrate metabolism; lactose degradation; D-galactose 6-phosphate and beta-D-glucose from lactose 6-phosphate: step 1/1. This chain is 6-phospho-beta-galactosidase, found in Lacticaseibacillus casei (Lactobacillus casei).